The sequence spans 211 residues: Ras-related protein RABB1b (211 aa).

Residue 13-20 (GDTGVGKS) coordinates GTP. Residues 35–43 (HDLTIGVEF) carry the Effector region motif. GTP contacts are provided by residues 61–65 (DTAGQ), 119–122 (NKCD), and 149–150 (SA). Residues Cys-209 and Cys-210 are each lipidated (S-geranylgeranyl cysteine).

It belongs to the small GTPase superfamily. Rab family.

It is found in the cell membrane. Functionally, intracellular vesicle trafficking and protein transport. This Arabidopsis thaliana (Mouse-ear cress) protein is Ras-related protein RABB1b (RABB1B).